We begin with the raw amino-acid sequence, 1930 residues long: Transport and Golgi organization protein 1 homolog (1930 aa).

Positions 1–24 (MAAAPGLLFWLFVLGALWWVPGQS) are cleaved as a signal peptide. The Lumenal segment spans residues 25 to 1171 (DLSHGRRFSD…EPAAVPPLES (1147 aa)). The SH3 domain occupies 45 to 107 (MLMYRGKALE…PKDLIKVLHK (63 aa)). Disordered regions lie at residues 144–263 (LELE…REKT), 317–496 (EEEE…AAEK), 547–737 (LGSS…MNSQ), 754–891 (TKQP…TPEI), and 1018–1149 (TAPL…PVGA). A compositionally biased stretch (basic and acidic residues) spans 152–189 (EESKKAEEVSQHREKSPEESRGRELDPVPEPEAFRADS). Residues 197-211 (SESTEGLQGQPSAQE) are compositionally biased toward polar residues. Serine 229 carries the phosphoserine modification. Over residues 247–256 (ESRTGNSSPA) the composition is skewed to polar residues. Residues 317–330 (EEEEEVEEDADSSD) are compositionally biased toward acidic residues. Over residues 338 to 368 (SDKDEKVPGKPMIEKYLTDKDPNLSEEDKVE) the composition is skewed to basic and acidic residues. Asparagine 360 is a glycosylation site (N-linked (GlcNAc...) asparagine). The segment covering 420–430 (DSEDEGDDLFV) has biased composition (acidic residues). Basic and acidic residues-rich tracts occupy residues 431–442 (EEPKTNDVKDSE) and 451–461 (GEEKDIQESRK). Residue asparagine 631 is glycosylated (N-linked (GlcNAc...) asparagine). Over residues 661-677 (EDGTDAEQARAIRRPQE) the composition is skewed to basic and acidic residues. Residues 692 to 701 (DEEEEEEEGD) show a composition bias toward acidic residues. Over residues 715–726 (VSAQQSRENSPS) the composition is skewed to polar residues. Positions 791 to 800 (EESHLADMRA) are enriched in basic and acidic residues. Serine 856 bears the Phosphoserine mark. Over residues 1030 to 1039 (GWARPGEERQ) the composition is skewed to basic and acidic residues. 2 stretches are compositionally biased toward polar residues: residues 1040-1054 (PPQQDSLPQENTGDL) and 1115-1127 (QPVTGYTSTSEVS). The segment covering 1128–1137 (QKPDTKKDID) has biased composition (basic and acidic residues). The stretch at 1172 to 1192 (AFGSLYAFILYLSKMLLATLP) is an intramembrane region. The Lumenal segment spans residues 1193 to 1202 (DNVQPGPDFY). The helical transmembrane segment at 1203–1223 (GLPWQPVIITAVLGIVSFAIF) threads the bilayer. The Cytoplasmic segment spans residues 1224–1930 (SWRTILVVKS…DRSQASKPTP (707 aa)). Coiled-coil stretches lie at residues 1236-1329 (YQVT…KNQD) and 1359-1422 (LNEA…EIAL). The segment at 1238–1677 (VTEKQISEKL…VIVKPMPGRP (440 aa)) is mediates interaction with MIA2. Residues 1447 to 1472 (ESEDPDKGGNESDDLANGETGGDRSE) form a disordered region. The residue at position 1458 (serine 1458) is a Phosphoserine. Residues 1514-1662 (NLEDQIKKLE…LLEMTQKMAM (149 aa)) adopt a coiled-coil conformation. 3 disordered regions span residues 1669 to 1796 (IVKP…VPLM), 1801 to 1820 (PPPIRYGPPPQLCGGPFGPR), and 1840 to 1930 (APGV…KPTP). A compositionally biased stretch (polar residues) spans 1677-1694 (PNTQNPPRRGLLSQNGSF). 2 positions are modified to phosphoserine: serine 1693 and serine 1705. Residues 1706–1715 (PPLPAEPPGR) show a composition bias toward pro residues. The segment covering 1722–1738 (SRRDTPRSEFGSLDRHL) has biased composition (basic and acidic residues). A phosphoserine mark is found at serine 1733, serine 1754, serine 1766, and serine 1770. Positions 1760 to 1773 (PVVNSSSRSSSPAK) are enriched in low complexity. The tract at residues 1776–1930 (DEGKVNMAPK…DRSQASKPTP (155 aa)) is proline-rich domain (PRD); mediates interaction with the COPII coat subunits SEC23A and SEC23B. Over residues 1801 to 1811 (PPPIRYGPPPQ) the composition is skewed to pro residues. The residue at position 1805 (arginine 1805) is an Asymmetric dimethylarginine. The tract at residues 1809 to 1869 (PPQLCGGPFG…GHTPFRPPGS (61 aa)) is SEC16A-interacting region (SIR); required for its localization to endoplasmic reticulum exit sites and for its interaction with SEC16A. Residues 1846–1858 (GKRDLPLDPREFL) show a composition bias toward basic and acidic residues. Residues 1881 to 1898 (RLPPPTHGPQEYPPPPPA) show a composition bias toward pro residues. Serine 1915 carries the post-translational modification Phosphoserine. Polar residues predominate over residues 1915-1930 (SPSSVQDRSQASKPTP).

Belongs to the MIA/OTOR family. Tango1 subfamily. Interacts with MIA2. Interacts (via SH3 domain) with COL7A1. Interacts with the COPII coat subunits SEC23A, SEC23B and maybe SEC24C. May interact with APOB and MIA2. Interacts with SEC16A.

Its subcellular location is the endoplasmic reticulum membrane. Its function is as follows. Plays a role in the transport of cargos that are too large to fit into COPII-coated vesicles and require specific mechanisms to be incorporated into membrane-bound carriers and exported from the endoplasmic reticulum. This protein is required for collagen VII (COL7A1) secretion by loading COL7A1 into transport carriers. It may participate in cargo loading of COL7A1 at endoplasmic reticulum exit sites by binding to COPII coat subunits Sec23/24 and guiding SH3-bound COL7A1 into a growing carrier. Does not play a role in global protein secretion and is apparently specific to COL7A1 cargo loading. However, it may participate in secretion of other proteins in cells that do not secrete COL7A1. It is also specifically required for the secretion of lipoproteins by participating in their export from the endoplasmic reticulum. Required for correct assembly of COPII coat components at endoplasmic reticulum exit sites (ERES) and for the localization of SEC16A and membrane-bound ER-resident complexes consisting of MIA2 and PREB/SEC12 to ERES. In Mus musculus (Mouse), this protein is Transport and Golgi organization protein 1 homolog.